Consider the following 87-residue polypeptide: LYR motif-containing protein 2 (87 aa).

The N-terminal 19 residues, 1–19 (MGSRLPPAALTLKQFLVRQ), are a transit peptide targeting the mitochondrion.

The protein belongs to the complex I LYR family.

It localises to the mitochondrion. In terms of biological role, involved in efficient integration of the N-module into mitochondrial respiratory chain complex I. The polypeptide is LYR motif-containing protein 2 (lyrm2) (Xenopus laevis (African clawed frog)).